Here is a 477-residue protein sequence, read N- to C-terminus: ACT domain-containing protein ACR1 (477 aa).

4 ACT domains span residues 38-124 (LIKV…REVQ), 134-214 (AFEI…GDVS), 283-358 (MVNV…RASQ), and 361-441 (KLEI…MMPR). The Bipartite nuclear localization signal motif lies at 329–345 (KKNGGTLETEGQRERLR).

In terms of tissue distribution, expressed in flowers and siliques.

It is found in the nucleus. Functionally, may bind amino acids. The sequence is that of ACT domain-containing protein ACR1 from Arabidopsis thaliana (Mouse-ear cress).